Consider the following 99-residue polypeptide: Malonate decarboxylase acyl carrier protein (99 aa).

Ser25 carries the post-translational modification O-(phosphoribosyl dephospho-coenzyme A)serine.

This sequence belongs to the MdcC family. In terms of processing, covalently binds the prosthetic group of malonate decarboxylase.

It localises to the cytoplasm. Functionally, subunit of malonate decarboxylase, it is an acyl carrier protein to which acetyl and malonyl thioester residues are bound via a 2'-(5''-phosphoribosyl)-3'-dephospho-CoA prosthetic group and turn over during the catalytic mechanism. This is Malonate decarboxylase acyl carrier protein from Pseudomonas syringae pv. tomato (strain ATCC BAA-871 / DC3000).